The chain runs to 314 residues: MINSAVNLLVNPQDYYIKSESREDLPQINLFKLVGNLGYHAMMLEVHLTPKPGLVDLCTNGAHDDMDIHTFENSAQAINPFLIKFLYAGLNHSDTPIDSLLPKLRPVGLNAEEAMFQATSGINTHKGMIFSLGIVCGVIGWLRGNNLSFDAMHISKAVKCCCHDLVFKELRQNHDKPKTYGEFLYKEHGLTGARGEAASGLATVMDHGLPAFEKTVKEGFSTEQALWQSLLVLMANNLDTNLVSRGGMEGLLYAQQAAQGLLVKGGCRYTNLESELTELDEIFTEKKLSPGGSADLLAITWLLAQMNELSPKYV.

Belongs to the CitG/MdcB family.

The enzyme catalyses 3'-dephospho-CoA + ATP = 2'-(5''-triphospho-alpha-D-ribosyl)-3'-dephospho-CoA + adenine. The sequence is that of Probable 2-(5''-triphosphoribosyl)-3'-dephosphocoenzyme-A synthase from Photobacterium profundum (strain SS9).